The chain runs to 292 residues: Phosphatidylserine decarboxylase proenzyme (292 aa).

Residues Asp89, His146, and Ser252 each act as charge relay system; for autoendoproteolytic cleavage activity in the active site. Catalysis depends on Ser252, which acts as the Schiff-base intermediate with substrate; via pyruvic acid; for decarboxylase activity. Ser252 carries the post-translational modification Pyruvic acid (Ser); by autocatalysis.

It belongs to the phosphatidylserine decarboxylase family. PSD-B subfamily. Prokaryotic type I sub-subfamily. As to quaternary structure, heterodimer of a large membrane-associated beta subunit and a small pyruvoyl-containing alpha subunit. It depends on pyruvate as a cofactor. In terms of processing, is synthesized initially as an inactive proenzyme. Formation of the active enzyme involves a self-maturation process in which the active site pyruvoyl group is generated from an internal serine residue via an autocatalytic post-translational modification. Two non-identical subunits are generated from the proenzyme in this reaction, and the pyruvate is formed at the N-terminus of the alpha chain, which is derived from the carboxyl end of the proenzyme. The autoendoproteolytic cleavage occurs by a canonical serine protease mechanism, in which the side chain hydroxyl group of the serine supplies its oxygen atom to form the C-terminus of the beta chain, while the remainder of the serine residue undergoes an oxidative deamination to produce ammonia and the pyruvoyl prosthetic group on the alpha chain. During this reaction, the Ser that is part of the protease active site of the proenzyme becomes the pyruvoyl prosthetic group, which constitutes an essential element of the active site of the mature decarboxylase.

It is found in the cell membrane. It carries out the reaction a 1,2-diacyl-sn-glycero-3-phospho-L-serine + H(+) = a 1,2-diacyl-sn-glycero-3-phosphoethanolamine + CO2. It functions in the pathway phospholipid metabolism; phosphatidylethanolamine biosynthesis; phosphatidylethanolamine from CDP-diacylglycerol: step 2/2. Functionally, catalyzes the formation of phosphatidylethanolamine (PtdEtn) from phosphatidylserine (PtdSer). The polypeptide is Phosphatidylserine decarboxylase proenzyme (Shewanella sp. (strain ANA-3)).